Here is a 334-residue protein sequence, read N- to C-terminus: N-acetyl-gamma-glutamyl-phosphate reductase (334 aa).

Residue Cys-154 is part of the active site.

This sequence belongs to the NAGSA dehydrogenase family. Type 1 subfamily.

It is found in the cytoplasm. The catalysed reaction is N-acetyl-L-glutamate 5-semialdehyde + phosphate + NADP(+) = N-acetyl-L-glutamyl 5-phosphate + NADPH + H(+). The protein operates within amino-acid biosynthesis; L-arginine biosynthesis; N(2)-acetyl-L-ornithine from L-glutamate: step 3/4. Its function is as follows. Catalyzes the NADPH-dependent reduction of N-acetyl-5-glutamyl phosphate to yield N-acetyl-L-glutamate 5-semialdehyde. This is N-acetyl-gamma-glutamyl-phosphate reductase from Escherichia coli O6:H1 (strain CFT073 / ATCC 700928 / UPEC).